Consider the following 342-residue polypeptide: Hypoxia responsive morphology factor C (342 aa).

Residues Arg-46–Ile-68 carry the Bipartite nuclear localization signal motif. Residues Ala-151 to Pro-181 form an RNA recognition motif (RRM)-like domain region.

It belongs to the hrmA family.

Its subcellular location is the nucleus. Its function is as follows. Probably modulates the generation of the hypoxia-typic morphotype (called H-MORPH) with altered biofilm architecture that leads to increased host inflammation, rapid disease progression, and mortality in a murine model of invasive aspergillosis. The chain is Hypoxia responsive morphology factor C from Aspergillus fumigatus (strain CBS 144.89 / FGSC A1163 / CEA10) (Neosartorya fumigata).